The following is a 568-amino-acid chain: Probable pectinesterase/pectinesterase inhibitor 23 (568 aa).

Positions 1-33 are cleaved as a signal peptide; that stretch reads MGSDGDKKKKFIVAGSVSGFLVIMVVSVAVVTS. The segment at 45 to 198 is pectinesterase inhibitor 23; sequence RKTTKAVQAV…RELSSNSLAM (154 aa). Residues Asn94, Asn210, and Asn316 are each glycosylated (N-linked (GlcNAc...) asparagine). A pectinesterase 23 region spans residues 251–548; the sequence is PGPVKANAVV…PQDALLYTGD (298 aa). Substrate is bound by residues Thr333 and Gln363. Asp386 acts as the Proton donor; for pectinesterase activity in catalysis. Residues Cys400 and Cys420 are joined by a disulfide bond. Asp407 (nucleophile; for pectinesterase activity) is an active-site residue. 2 residues coordinate substrate: Arg475 and Trp477.

In the N-terminal section; belongs to the PMEI family. It in the C-terminal section; belongs to the pectinesterase family. As to expression, expressed in mature pollen grains in the anthers and on the stigma. Found in pollen tubes within the style.

The protein localises to the secreted. It localises to the cell wall. The catalysed reaction is [(1-&gt;4)-alpha-D-galacturonosyl methyl ester](n) + n H2O = [(1-&gt;4)-alpha-D-galacturonosyl](n) + n methanol + n H(+). Its pathway is glycan metabolism; pectin degradation; 2-dehydro-3-deoxy-D-gluconate from pectin: step 1/5. Functionally, acts in the modification of cell walls via demethylesterification of cell wall pectin. The protein is Probable pectinesterase/pectinesterase inhibitor 23 (PME23) of Arabidopsis thaliana (Mouse-ear cress).